Consider the following 65-residue polypeptide: Large ribosomal subunit protein bL35 (65 aa).

The protein belongs to the bacterial ribosomal protein bL35 family.

The sequence is that of Large ribosomal subunit protein bL35 from Thermus thermophilus (strain ATCC BAA-163 / DSM 7039 / HB27).